The sequence spans 236 residues: Biosynthetic peptidoglycan transglycosylase (236 aa).

The helical transmembrane segment at glycine 20–proline 40 threads the bilayer.

Belongs to the glycosyltransferase 51 family.

The protein resides in the cell inner membrane. It catalyses the reaction [GlcNAc-(1-&gt;4)-Mur2Ac(oyl-L-Ala-gamma-D-Glu-L-Lys-D-Ala-D-Ala)](n)-di-trans,octa-cis-undecaprenyl diphosphate + beta-D-GlcNAc-(1-&gt;4)-Mur2Ac(oyl-L-Ala-gamma-D-Glu-L-Lys-D-Ala-D-Ala)-di-trans,octa-cis-undecaprenyl diphosphate = [GlcNAc-(1-&gt;4)-Mur2Ac(oyl-L-Ala-gamma-D-Glu-L-Lys-D-Ala-D-Ala)](n+1)-di-trans,octa-cis-undecaprenyl diphosphate + di-trans,octa-cis-undecaprenyl diphosphate + H(+). Its pathway is cell wall biogenesis; peptidoglycan biosynthesis. Functionally, peptidoglycan polymerase that catalyzes glycan chain elongation from lipid-linked precursors. This Mesorhizobium japonicum (strain LMG 29417 / CECT 9101 / MAFF 303099) (Mesorhizobium loti (strain MAFF 303099)) protein is Biosynthetic peptidoglycan transglycosylase.